Reading from the N-terminus, the 594-residue chain is Aspartate--tRNA(Asp/Asn) ligase (594 aa).

Glutamate 176 contributes to the L-aspartate binding site. The interval 200 to 203 is aspartate; sequence QIFK. L-aspartate is bound at residue arginine 222. Residues 222 to 224 and glutamine 231 contribute to the ATP site; that span reads RDE. Histidine 450 lines the L-aspartate pocket. An ATP-binding site is contributed by glutamate 484. L-aspartate is bound at residue arginine 491. An ATP-binding site is contributed by 536–539; the sequence is GLDR.

This sequence belongs to the class-II aminoacyl-tRNA synthetase family. Type 1 subfamily. Homodimer.

The protein resides in the cytoplasm. The enzyme catalyses tRNA(Asx) + L-aspartate + ATP = L-aspartyl-tRNA(Asx) + AMP + diphosphate. Aspartyl-tRNA synthetase with relaxed tRNA specificity since it is able to aspartylate not only its cognate tRNA(Asp) but also tRNA(Asn). Reaction proceeds in two steps: L-aspartate is first activated by ATP to form Asp-AMP and then transferred to the acceptor end of tRNA(Asp/Asn). The protein is Aspartate--tRNA(Asp/Asn) ligase of Geobacillus sp. (strain WCH70).